A 136-amino-acid polypeptide reads, in one-letter code: Protein YebF (136 aa).

The signal sequence occupies residues 1–23 (MKKTGLALVLATILLGMMGSVHA). In terms of domain architecture, YebF/Cmi spans 30–117 (KVPACIGLNQ…KSGTMTYTGL (88 aa)). C34 and C107 are disulfide-bonded. Positions 117-136 (LNAQTRPDPQIGLNSQAGPK) are disordered.

The protein belongs to the YebF family.

The protein resides in the secreted. This Yersinia pseudotuberculosis serotype O:1b (strain IP 31758) protein is Protein YebF.